Reading from the N-terminus, the 406-residue chain is Argininosuccinate synthase (406 aa).

Residues 11-19 (AYSGGLDTS) and Ala-38 each bind ATP. L-citrulline is bound by residues Tyr-91 and Ser-96. Gly-121 serves as a coordination point for ATP. The L-aspartate site is built by Thr-123, Asn-127, and Asp-128. An L-citrulline-binding site is contributed by Asn-127. Residues Arg-131, Ser-181, Ser-190, Glu-266, and Tyr-278 each contribute to the L-citrulline site.

It belongs to the argininosuccinate synthase family. Type 1 subfamily. Homotetramer.

Its subcellular location is the cytoplasm. It catalyses the reaction L-citrulline + L-aspartate + ATP = 2-(N(omega)-L-arginino)succinate + AMP + diphosphate + H(+). It functions in the pathway amino-acid biosynthesis; L-arginine biosynthesis; L-arginine from L-ornithine and carbamoyl phosphate: step 2/3. This is Argininosuccinate synthase from Campylobacter jejuni subsp. jejuni serotype O:6 (strain 81116 / NCTC 11828).